A 250-amino-acid chain; its full sequence is Ubiquinone/menaquinone biosynthesis C-methyltransferase UbiE (250 aa).

Residues threonine 73, aspartate 94, 122–123, and serine 139 each bind S-adenosyl-L-methionine; that span reads NA.

Belongs to the class I-like SAM-binding methyltransferase superfamily. MenG/UbiE family.

The catalysed reaction is a 2-demethylmenaquinol + S-adenosyl-L-methionine = a menaquinol + S-adenosyl-L-homocysteine + H(+). The enzyme catalyses a 2-methoxy-6-(all-trans-polyprenyl)benzene-1,4-diol + S-adenosyl-L-methionine = a 5-methoxy-2-methyl-3-(all-trans-polyprenyl)benzene-1,4-diol + S-adenosyl-L-homocysteine + H(+). It participates in quinol/quinone metabolism; menaquinone biosynthesis; menaquinol from 1,4-dihydroxy-2-naphthoate: step 2/2. It functions in the pathway cofactor biosynthesis; ubiquinone biosynthesis. Methyltransferase required for the conversion of demethylmenaquinol (DMKH2) to menaquinol (MKH2) and the conversion of 2-polyprenyl-6-methoxy-1,4-benzoquinol (DDMQH2) to 2-polyprenyl-3-methyl-6-methoxy-1,4-benzoquinol (DMQH2). This is Ubiquinone/menaquinone biosynthesis C-methyltransferase UbiE from Francisella tularensis subsp. holarctica (strain FTNF002-00 / FTA).